The chain runs to 65 residues: Protein translocase subunit SecE (65 aa).

The Cytoplasmic portion of the chain corresponds to 1–34 (MEKLRKFFREVIAEAKKISWPSRKELLTSFGVVL). A helical membrane pass occupies residues 35-51 (VILAVTSVYFFVLDFIF). Topologically, residues 52–65 (SGVVSAIFKALGIG) are extracellular.

The protein belongs to the SecE/SEC61-gamma family. In terms of assembly, component of the Sec protein translocase complex. Heterotrimer consisting of SecY, SecE and SecG subunits. The heterotrimers can form oligomers, although 1 heterotrimer is thought to be able to translocate proteins. Interacts with SecDF, and other proteins may be involved. The channel interacts with SecA via subunit SecY.

The protein resides in the cell inner membrane. In terms of biological role, essential subunit of the protein translocation channel SecYEG. Clamps together the 2 halves of SecY. May contact the channel plug during translocation. This Thermotoga maritima (strain ATCC 43589 / DSM 3109 / JCM 10099 / NBRC 100826 / MSB8) protein is Protein translocase subunit SecE.